A 384-amino-acid chain; its full sequence is Chaperone protein DnaJ (384 aa).

The J domain occupies 5 to 69 (DYYKVLGVDR…QKRAQYDQFG (65 aa)). The CR-type zinc finger occupies 141-223 (GKKTQVSYTR…CGGKGTVERK (83 aa)). Residues cysteine 154, cysteine 157, cysteine 171, cysteine 174, cysteine 197, cysteine 200, cysteine 211, and cysteine 214 each contribute to the Zn(2+) site. CXXCXGXG motif repeat units lie at residues 154-161 (CETCGGNG), 171-178 (CDKCHGTG), 197-204 (CDKCNGRG), and 211-218 (CKTCGGKG).

It belongs to the DnaJ family. As to quaternary structure, homodimer. It depends on Zn(2+) as a cofactor.

It is found in the cytoplasm. Its function is as follows. Participates actively in the response to hyperosmotic and heat shock by preventing the aggregation of stress-denatured proteins and by disaggregating proteins, also in an autonomous, DnaK-independent fashion. Unfolded proteins bind initially to DnaJ; upon interaction with the DnaJ-bound protein, DnaK hydrolyzes its bound ATP, resulting in the formation of a stable complex. GrpE releases ADP from DnaK; ATP binding to DnaK triggers the release of the substrate protein, thus completing the reaction cycle. Several rounds of ATP-dependent interactions between DnaJ, DnaK and GrpE are required for fully efficient folding. Also involved, together with DnaK and GrpE, in the DNA replication of plasmids through activation of initiation proteins. This is Chaperone protein DnaJ from Lactobacillus acidophilus (strain ATCC 700396 / NCK56 / N2 / NCFM).